Here is a 256-residue protein sequence, read N- to C-terminus: Galactitol 2-dehydrogenase (256 aa).

Residues 15–17, Asp-36, 59–60, Asn-86, Tyr-152, and Lys-156 each bind NAD(+); these read RGI and DV. Catalysis depends on Tyr-152, which acts as the Proton acceptor.

It belongs to the short-chain dehydrogenases/reductases (SDR) family.

It catalyses the reaction galactitol + NAD(+) = keto-D-tagatose + NADH + H(+). The enzyme catalyses keto-D-fructose + NADH + H(+) = D-sorbitol + NAD(+). Its pathway is carbohydrate metabolism. Involved in galactitol catabolism. Catalyzes the oxidation of galactitol to D-tagatose. Can also catalyze the oxidation of D-sorbitol to D-fructose. The chain is Galactitol 2-dehydrogenase from Agrobacterium fabrum (strain C58 / ATCC 33970) (Agrobacterium tumefaciens (strain C58)).